Consider the following 428-residue polypeptide: MKREKVTSLNGEIHIPGDKSISHRSVMFGALAEGTTTVKNFLPGADCLSTIACFRKMGVSIEQNGSDVTIYGKGIDALCEPDSLLDVGNSGTTIRLMLGILAGRPFHSTVAGDESIAKRPMKRVTEPLKQMGAAIDGRADGGFTPLSVRGGQLKGIDYVSPVASAQIKSAVLLAGLQAEGTTTVTEPHKSRDHTERMLNAFGAELAETETSASVTGGQKLRGADIFVPGDISSAAFFLAAGAVVPGSRIVLKNVGLNPTRTGMIDVLKQMGASLEVIPSEADSAEPYGDLVIETSALKAAEIGGEIIPRLIDEIPIIALLATQAEGTTVIKDAAELKVKETNRIDTVVSELRKIGADIEPTEDGMKIHGKKTLAGGADVSSHGDHRIGMMLGVASCLTEEPIDIRDTEAIHVSYPTFFEHLDQLAKKA.

3-phosphoshikimate-binding residues include lysine 19, serine 20, and arginine 24. Lysine 19 is a binding site for phosphoenolpyruvate. The phosphoenolpyruvate site is built by glycine 91 and arginine 119. 3-phosphoshikimate-binding residues include serine 164, glutamine 166, aspartate 312, and lysine 339. Glutamine 166 is a phosphoenolpyruvate binding site. Aspartate 312 acts as the Proton acceptor in catalysis. Phosphoenolpyruvate contacts are provided by arginine 343 and arginine 386.

Belongs to the EPSP synthase family. As to quaternary structure, monomer.

The protein localises to the cytoplasm. The enzyme catalyses 3-phosphoshikimate + phosphoenolpyruvate = 5-O-(1-carboxyvinyl)-3-phosphoshikimate + phosphate. It functions in the pathway metabolic intermediate biosynthesis; chorismate biosynthesis; chorismate from D-erythrose 4-phosphate and phosphoenolpyruvate: step 6/7. Its function is as follows. Catalyzes the transfer of the enolpyruvyl moiety of phosphoenolpyruvate (PEP) to the 5-hydroxyl of shikimate-3-phosphate (S3P) to produce enolpyruvyl shikimate-3-phosphate and inorganic phosphate. The sequence is that of 3-phosphoshikimate 1-carboxyvinyltransferase from Bacillus velezensis (strain DSM 23117 / BGSC 10A6 / LMG 26770 / FZB42) (Bacillus amyloliquefaciens subsp. plantarum).